Here is a 71-residue protein sequence, read N- to C-terminus: Conotoxin Ca5.1 (71 aa).

The first 19 residues, 1–19, serve as a signal peptide directing secretion; that stretch reads MRCVPVFIILLLLASPAAS. Positions 20 to 56 are excised as a propeptide; it reads DPLEKRIQSDLIRAALEDADTKNDPRILEDIVSTALA.

It belongs to the conotoxin T superfamily. In terms of processing, contains 2 disulfide bonds that can be either 'C1-C3, C2-C4' or 'C1-C4, C2-C3', since these disulfide connectivities have been observed for conotoxins with cysteine framework V (for examples, see AC P0DQQ7 and AC P81755). Expressed by the venom duct.

Its subcellular location is the secreted. The chain is Conotoxin Ca5.1 from Conus caracteristicus (Characteristic cone).